The sequence spans 330 residues: Phosphate acyltransferase (330 aa).

It belongs to the PlsX family. In terms of assembly, homodimer. Probably interacts with PlsY.

It localises to the cytoplasm. It catalyses the reaction a fatty acyl-[ACP] + phosphate = an acyl phosphate + holo-[ACP]. The protein operates within lipid metabolism; phospholipid metabolism. In terms of biological role, catalyzes the reversible formation of acyl-phosphate (acyl-PO(4)) from acyl-[acyl-carrier-protein] (acyl-ACP). This enzyme utilizes acyl-ACP as fatty acyl donor, but not acyl-CoA. This chain is Phosphate acyltransferase, found in Bacillus cytotoxicus (strain DSM 22905 / CIP 110041 / 391-98 / NVH 391-98).